Reading from the N-terminus, the 405-residue chain is Elongation factor Tu (405 aa).

One can recognise a tr-type G domain in the interval 10 to 215; the sequence is KPHVNIGTIG…AVDSYIPTPE (206 aa). Residues 19-26 are G1; it reads GHVDHGKT. Residue 19–26 participates in GTP binding; that stretch reads GHVDHGKT. Thr26 lines the Mg(2+) pocket. The interval 61–65 is G2; sequence GITIN. Positions 82 to 85 are G3; the sequence is DCPG. GTP contacts are provided by residues 82-86 and 137-140; these read DCPGH and NKVD. The tract at residues 137-140 is G4; sequence NKVD. Positions 175 to 177 are G5; the sequence is SAL.

This sequence belongs to the TRAFAC class translation factor GTPase superfamily. Classic translation factor GTPase family. EF-Tu/EF-1A subfamily. In terms of assembly, monomer.

Its subcellular location is the cytoplasm. The enzyme catalyses GTP + H2O = GDP + phosphate + H(+). In terms of biological role, GTP hydrolase that promotes the GTP-dependent binding of aminoacyl-tRNA to the A-site of ribosomes during protein biosynthesis. In Deinococcus radiodurans (strain ATCC 13939 / DSM 20539 / JCM 16871 / CCUG 27074 / LMG 4051 / NBRC 15346 / NCIMB 9279 / VKM B-1422 / R1), this protein is Elongation factor Tu.